Here is a 363-residue protein sequence, read N- to C-terminus: Phosphoserine aminotransferase (363 aa).

R42 provides a ligand contact to L-glutamate. Pyridoxal 5'-phosphate-binding positions include 76-77, W101, T151, D170, and Q193; that span reads AS. K194 bears the N6-(pyridoxal phosphate)lysine mark. 234-235 is a pyridoxal 5'-phosphate binding site; sequence NT.

It belongs to the class-V pyridoxal-phosphate-dependent aminotransferase family. SerC subfamily. As to quaternary structure, homodimer. Pyridoxal 5'-phosphate serves as cofactor.

The protein localises to the cytoplasm. The enzyme catalyses O-phospho-L-serine + 2-oxoglutarate = 3-phosphooxypyruvate + L-glutamate. The catalysed reaction is 4-(phosphooxy)-L-threonine + 2-oxoglutarate = (R)-3-hydroxy-2-oxo-4-phosphooxybutanoate + L-glutamate. The protein operates within amino-acid biosynthesis; L-serine biosynthesis; L-serine from 3-phospho-D-glycerate: step 2/3. In terms of biological role, catalyzes the reversible conversion of 3-phosphohydroxypyruvate to phosphoserine and of 3-hydroxy-2-oxo-4-phosphonooxybutanoate to phosphohydroxythreonine. The protein is Phosphoserine aminotransferase of Listeria monocytogenes serotype 4b (strain F2365).